Consider the following 475-residue polypeptide: Aspartyl/glutamyl-tRNA(Asn/Gln) amidotransferase subunit B (475 aa).

The protein belongs to the GatB/GatE family. GatB subfamily. As to quaternary structure, heterotrimer of A, B and C subunits.

It catalyses the reaction L-glutamyl-tRNA(Gln) + L-glutamine + ATP + H2O = L-glutaminyl-tRNA(Gln) + L-glutamate + ADP + phosphate + H(+). It carries out the reaction L-aspartyl-tRNA(Asn) + L-glutamine + ATP + H2O = L-asparaginyl-tRNA(Asn) + L-glutamate + ADP + phosphate + 2 H(+). Allows the formation of correctly charged Asn-tRNA(Asn) or Gln-tRNA(Gln) through the transamidation of misacylated Asp-tRNA(Asn) or Glu-tRNA(Gln) in organisms which lack either or both of asparaginyl-tRNA or glutaminyl-tRNA synthetases. The reaction takes place in the presence of glutamine and ATP through an activated phospho-Asp-tRNA(Asn) or phospho-Glu-tRNA(Gln). The protein is Aspartyl/glutamyl-tRNA(Asn/Gln) amidotransferase subunit B of Hydrogenovibrio crunogenus (strain DSM 25203 / XCL-2) (Thiomicrospira crunogena).